A 477-amino-acid chain; its full sequence is UDP-glycosyltransferase 71K1 (477 aa).

UDP-alpha-D-glucose-binding positions include S285, 350–351, 368–376, and 390–393; these read WA, HCGWNSILE, and YAEQ.

This sequence belongs to the UDP-glycosyltransferase family.

Functionally, glycosyltransferase that possesses chalcone and flavonol 2'-O-glycosyltransferase activity. Converts phloretin to phlorizin (phloretin 2'-O-glucoside), a potent antioxidant. Possesses glycosyltransferase activity toward quercetin, isoliquiritigenin, butein and caffeic acid. The polypeptide is UDP-glycosyltransferase 71K1 (Malus domestica (Apple)).